The sequence spans 1368 residues: Cingulin (1368 aa).

Residues 9-378 (MADQHIPVGQ…KQQRTVQSEF (370 aa)) form an interaction with TJP3/ZO3 and myosin region. Positions 9–435 (MADQHIPVGQ…EKLPSLQVQP (427 aa)) are head. Residues 41–55 (QDSYGVAVRVQGIDG) carry the ZIM motif. Disordered stretches follow at residues 71-264 (FGVQ…TKPL), 278-312 (GQVR…DTAD), 1053-1080 (SRKE…NSSR), 1163-1183 (NRSR…RSRG), and 1308-1368 (QQEI…TSSC). Residues 83-97 (NASNTSPPNYQNYSS) show a composition bias toward polar residues. Residues 101-294 (GPSRSISSES…ARRSQALKDE (194 aa)) form an interaction with F-actin region. Composition is skewed to low complexity over residues 116-132 (PYGS…YSSA) and 200-211 (SQSSRDSAWSRS). Residues 150 to 295 (SSLPRPLQAS…RRSQALKDER (146 aa)) are interaction with TJP2/ZO2. The segment covering 228-256 (SATSQQSTSVSNKTKKNGLSTSSPSNQSN) has biased composition (polar residues). Residues 290–312 (ALKDERKRSQSLDGRKNYHDTAD) show a composition bias toward basic and acidic residues. An interaction with myosin region spans residues 377-1368 (EFQLKSTPDL…TESNLQTSSC (992 aa)). The stretch at 436-1330 (GEDTISLGSQ…VMEKESKRKP (895 aa)) forms a coiled coil. A compositionally biased stretch (basic and acidic residues) spans 1320–1338 (KVMEKESKRKPIRPAHDDD). The tail stretch occupies residues 1331-1368 (IRPAHDDDLSSDGEFGGPYDPSSITSLLTESNLQTSSC). Residues 1352-1368 (SSITSLLTESNLQTSSC) are compositionally biased toward polar residues.

It belongs to the cingulin family. In terms of assembly, parallel homodimer. Interacts with TJP1/ZO1 and TJP2/ZO2 in vivo, and TJP3/ZO3, myosin and OCLN in vitro, possibly directly. Acts as an F-actin bundling protein in vitro. In terms of tissue distribution, localized on the cytoplasmic face of tight junctions of polarized epithelia and some endothelia.

The protein resides in the cell junction. Its subcellular location is the tight junction. Probably plays a role in the formation and regulation of the tight junction (TJ) paracellular permeability barrier, possibly by linking ZO proteins to the actomyosin cytoskeleton. This Xenopus laevis (African clawed frog) protein is Cingulin.